The chain runs to 469 residues: Uronate isomerase (469 aa).

It belongs to the metallo-dependent hydrolases superfamily. Uronate isomerase family.

It catalyses the reaction D-glucuronate = D-fructuronate. The catalysed reaction is aldehydo-D-galacturonate = keto-D-tagaturonate. It participates in carbohydrate metabolism; pentose and glucuronate interconversion. The chain is Uronate isomerase from Pectobacterium atrosepticum (strain SCRI 1043 / ATCC BAA-672) (Erwinia carotovora subsp. atroseptica).